We begin with the raw amino-acid sequence, 209 residues long: Urease accessory protein UreG (209 aa).

A GTP-binding site is contributed by 18–25; sequence GPVGSGKT.

Belongs to the SIMIBI class G3E GTPase family. UreG subfamily. In terms of assembly, homodimer. UreD, UreF and UreG form a complex that acts as a GTP-hydrolysis-dependent molecular chaperone, activating the urease apoprotein by helping to assemble the nickel containing metallocenter of UreC. The UreE protein probably delivers the nickel.

The protein resides in the cytoplasm. Functionally, facilitates the functional incorporation of the urease nickel metallocenter. This process requires GTP hydrolysis, probably effectuated by UreG. This Cupriavidus necator (strain ATCC 17699 / DSM 428 / KCTC 22496 / NCIMB 10442 / H16 / Stanier 337) (Ralstonia eutropha) protein is Urease accessory protein UreG.